Here is a 249-residue protein sequence, read N- to C-terminus: Adenosylcobinamide-GDP ribazoletransferase (249 aa).

7 consecutive transmembrane segments (helical) span residues 29–49 (LYWF…CAWL), 50–70 (PLSI…GFIV), 104–124 (VGSF…VAIL), 131–151 (AFAL…LLAA), 165–185 (GFVG…SLMM), 194–214 (PFLL…IGFL), and 226–246 (VLGA…GVAF).

The protein belongs to the CobS family. Mg(2+) is required as a cofactor.

Its subcellular location is the cell inner membrane. It catalyses the reaction alpha-ribazole + adenosylcob(III)inamide-GDP = adenosylcob(III)alamin + GMP + H(+). It carries out the reaction alpha-ribazole 5'-phosphate + adenosylcob(III)inamide-GDP = adenosylcob(III)alamin 5'-phosphate + GMP + H(+). The protein operates within cofactor biosynthesis; adenosylcobalamin biosynthesis; adenosylcobalamin from cob(II)yrinate a,c-diamide: step 7/7. Functionally, joins adenosylcobinamide-GDP and alpha-ribazole to generate adenosylcobalamin (Ado-cobalamin). Also synthesizes adenosylcobalamin 5'-phosphate from adenosylcobinamide-GDP and alpha-ribazole 5'-phosphate. The sequence is that of Adenosylcobinamide-GDP ribazoletransferase from Chlorobium phaeovibrioides (strain DSM 265 / 1930) (Prosthecochloris vibrioformis (strain DSM 265)).